Here is a 225-residue protein sequence, read N- to C-terminus: Heptaprenylglyceryl phosphate synthase (225 aa).

Residue Lys-6 coordinates sn-glycerol 1-phosphate. Mg(2+)-binding residues include Asp-8 and Thr-34. Sn-glycerol 1-phosphate-binding positions include 153–158 (YVEYSG), Gly-183, and 203–204 (GN).

It belongs to the GGGP/HepGP synthase family. Group I subfamily. As to quaternary structure, homodimer. The cofactor is Mg(2+).

It carries out the reaction sn-glycerol 1-phosphate + all-trans-heptaprenyl diphosphate = 3-heptaprenyl-sn-glycero-1-phosphate + diphosphate. Its pathway is membrane lipid metabolism; glycerophospholipid metabolism. Prenyltransferase that catalyzes in vivo the transfer of the heptaprenyl moiety of heptaprenyl pyrophosphate (HepPP; 35 carbon atoms) to the C3 hydroxyl of sn-glycerol-1-phosphate (G1P), producing heptaprenylglyceryl phosphate (HepGP). This reaction is an ether-bond-formation step in the biosynthesis of archaea-type G1P-based membrane lipids found in Bacillales. The chain is Heptaprenylglyceryl phosphate synthase from Listeria monocytogenes serotype 4b (strain CLIP80459).